The sequence spans 1256 residues: Octopamine receptor beta-3R (1256 aa).

Residues 1–143 (MSGVNVADLL…LDLSLLLLKG (143 aa)) lie on the Extracellular side of the membrane. Residues Asn36, Asn113, and Asn117 are each glycosylated (N-linked (GlcNAc...) asparagine). A helical transmembrane segment spans residues 144-164 (FIFSSIILAAVLGNALVIISV). Residues 165-171 (QRNRKLR) lie on the Cytoplasmic side of the membrane. The chain crosses the membrane as a helical span at residues 172–192 (VITNYFVVSLAMADMLVALCA). Topologically, residues 193 to 213 (MTFNASVELSGGKWMFGPFMC) are extracellular. An N-linked (GlcNAc...) asparagine glycan is attached at Asn196. Residues 214–236 (NVYNSLDVYFSTASILHLCCISV) traverse the membrane as a helical segment. The Cytoplasmic segment spans residues 237–258 (DRYYAIVRPLEYPLNMTHKTVC). A helical transmembrane segment spans residues 259–279 (FMLANVWILPALISFTPIFLG). The Extracellular portion of the chain corresponds to 280–305 (WYTTEEHLREISLHPDQCSFVVNKAY). A helical membrane pass occupies residues 306-326 (ALISSSVSFWIPGIVMLVMYW). At 327–1169 (RIFKEAIRQR…WKAEHKAART (843 aa)) the chain is on the cytoplasmic side. Disordered stretches follow at residues 377-427 (AREE…DLRD), 480-512 (ELDK…ESTA), 665-698 (LSHS…NKPD), 751-774 (GESP…EPSG), and 1087-1117 (DTTV…SSTR). Over residues 396–406 (TDEDDDRDECD) the composition is skewed to acidic residues. Over residues 489–498 (NGPQQQLSLT) the composition is skewed to polar residues. Positions 757-770 (PATPPPSLSPPELP) are enriched in pro residues. The chain crosses the membrane as a helical span at residues 1170–1190 (LGIIMGVFLLCWLPFFLWYVI). The Extracellular segment spans residues 1191–1202 (TSLCGPACPCPD). Residues 1203–1223 (VLVVVLFWIGYFNSTLNPLIY) traverse the membrane as a helical segment. Residues 1224 to 1256 (AYFNRDFREAFRNTLECVLPCLEKRNPYNAYYV) are Cytoplasmic-facing.

Belongs to the G-protein coupled receptor 1 family. In terms of tissue distribution, in the adult, expressed in the inferior and superior protocerebrum, the posterior lateral protocerebrum, the deutocerebrum, the surface of the subesophageal ganglion, the lateral cell body region, the cortical layer of the ventral nerve cord and the optic lobe medulla of the central nervous system (CNS). Also expressed in the nurse cells and follicle cells of the egg chambers in the ovary at oogenic stages 1-10, and spermatogonia and spermatocytes in the testis. Expressed ubiquitously in the embryonic CNS. In larvae, expressed in the ventral cortical layer of the ventral nerve cord, the cortical layer of the brain lobes, salivary glands, midgut, imaginal disks and developing reproductive organs. Expressed in the larval prothoracic gland with weak expression in other regions of the ring gland.

It is found in the cell membrane. Its function is as follows. Autoreceptor for octopamine, which is a neurotransmitter, neurohormone, and neuromodulator in invertebrates. Probably also acts as a receptor for tyramine during ecdysone biosynthesis. Required for the biosynthesis of the steroid hormone ecdysone which is necessary for metamorphosis. Involved in activation of prothoracicotropic hormone and insulin-like peptide signaling which is required for the expression of ecdysone biosynthetic genes. This is Octopamine receptor beta-3R from Drosophila melanogaster (Fruit fly).